Reading from the N-terminus, the 180-residue chain is Pro-glucagon (180 aa).

The signal sequence occupies residues 1–20; the sequence is MKTVYIVAGLFVMLVQGSWQ. Residues 23-59 form a disordered region; the sequence is PQDTEENARSFPASQTEPLEDPDQINEDKRHSQGTFT. Ser54 carries the phosphoserine modification. The propeptide occupies 84 to 89; that stretch reads NRNNIA. Phosphoserine occurs at positions 105 and 108. Residue Arg127 is modified to Arginine amide. A propeptide spanning residues 131–145 is cleaved from the precursor; sequence DFPEEVAIAEELGRR. Phosphoserine occurs at positions 150 and 152.

This sequence belongs to the glucagon family. Post-translationally, proglucagon is post-translationally processed in a tissue-specific manner in pancreatic A cells and intestinal L cells. In pancreatic A cells, the major bioactive hormone is glucagon cleaved by PCSK2/PC2. In the intestinal L cells PCSK1/PC1 liberates GLP-1, GLP-2, glicentin and oxyntomodulin. GLP-1 is further N-terminally truncated by post-translational processing in the intestinal L cells resulting in GLP-1(7-37) GLP-1-(7-36)amide. The C-terminal amidation is neither important for the metabolism of GLP-1 nor for its effects on the endocrine pancreas. In terms of tissue distribution, glucagon is secreted in the A cells of the islets of Langerhans. GLP-1, GLP-2, oxyntomodulin and glicentin are secreted from enteroendocrine cells throughout the gastrointestinal tract.

It is found in the secreted. Plays a key role in glucose metabolism and homeostasis. Regulates blood glucose by increasing gluconeogenesis and decreasing glycolysis. A counterregulatory hormone of insulin, raises plasma glucose levels in response to insulin-induced hypoglycemia. Plays an important role in initiating and maintaining hyperglycemic conditions in diabetes. Its function is as follows. Potent stimulator of glucose-dependent insulin release. Also stimulates insulin release in response to IL6. Plays important roles on gastric motility and the suppression of plasma glucagon levels. May be involved in the suppression of satiety and stimulation of glucose disposal in peripheral tissues, independent of the actions of insulin. Has growth-promoting activities on intestinal epithelium. May also regulate the hypothalamic pituitary axis (HPA) via effects on LH, TSH, CRH, oxytocin, and vasopressin secretion. Increases islet mass through stimulation of islet neogenesis and pancreatic beta cell proliferation. Inhibits beta cell apoptosis. In terms of biological role, stimulates intestinal growth and up-regulates villus height in the small intestine, concomitant with increased crypt cell proliferation and decreased enterocyte apoptosis. The gastrointestinal tract, from the stomach to the colon is the principal target for GLP-2 action. Plays a key role in nutrient homeostasis, enhancing nutrient assimilation through enhanced gastrointestinal function, as well as increasing nutrient disposal. Stimulates intestinal glucose transport and decreases mucosal permeability. Functionally, may modulate gastric acid secretion and the gastro-pyloro-duodenal activity. May play an important role in intestinal mucosal growth in the early period of life. Oxyntomodulin significantly reduces food intake. The protein is Pro-glucagon (Gcg) of Rattus norvegicus (Rat).